Consider the following 158-residue polypeptide: 2-C-methyl-D-erythritol 2,4-cyclodiphosphate synthase (158 aa).

A divalent metal cation contacts are provided by D9 and H11. Residues 9-11 and 35-36 each bind 4-CDP-2-C-methyl-D-erythritol 2-phosphate; these read DVH and HS. Residue H43 participates in a divalent metal cation binding. Residues 57–59, 62–66, 133–136, F140, and R143 contribute to the 4-CDP-2-C-methyl-D-erythritol 2-phosphate site; these read DIG, FPDTD, and TTTE.

Belongs to the IspF family. In terms of assembly, homotrimer. A divalent metal cation is required as a cofactor.

It carries out the reaction 4-CDP-2-C-methyl-D-erythritol 2-phosphate = 2-C-methyl-D-erythritol 2,4-cyclic diphosphate + CMP. It participates in isoprenoid biosynthesis; isopentenyl diphosphate biosynthesis via DXP pathway; isopentenyl diphosphate from 1-deoxy-D-xylulose 5-phosphate: step 4/6. Functionally, involved in the biosynthesis of isopentenyl diphosphate (IPP) and dimethylallyl diphosphate (DMAPP), two major building blocks of isoprenoid compounds. Catalyzes the conversion of 4-diphosphocytidyl-2-C-methyl-D-erythritol 2-phosphate (CDP-ME2P) to 2-C-methyl-D-erythritol 2,4-cyclodiphosphate (ME-CPP) with a corresponding release of cytidine 5-monophosphate (CMP). This chain is 2-C-methyl-D-erythritol 2,4-cyclodiphosphate synthase, found in Actinobacillus pleuropneumoniae serotype 7 (strain AP76).